We begin with the raw amino-acid sequence, 468 residues long: Kynureninase 2 (468 aa).

Pyridoxal 5'-phosphate is bound by residues L134, T135, 162 to 165 (FPSD), D247, H250, and Y272. K273 bears the N6-(pyridoxal phosphate)lysine mark. 2 residues coordinate pyridoxal 5'-phosphate: W312 and N340.

Belongs to the kynureninase family. As to quaternary structure, homodimer. Requires pyridoxal 5'-phosphate as cofactor.

Its subcellular location is the cytoplasm. It catalyses the reaction L-kynurenine + H2O = anthranilate + L-alanine + H(+). It carries out the reaction 3-hydroxy-L-kynurenine + H2O = 3-hydroxyanthranilate + L-alanine + H(+). The protein operates within amino-acid degradation; L-kynurenine degradation; L-alanine and anthranilate from L-kynurenine: step 1/1. It functions in the pathway cofactor biosynthesis; NAD(+) biosynthesis; quinolinate from L-kynurenine: step 2/3. Its function is as follows. Catalyzes the cleavage of L-kynurenine (L-Kyn) and L-3-hydroxykynurenine (L-3OHKyn) into anthranilic acid (AA) and 3-hydroxyanthranilic acid (3-OHAA), respectively. This Aspergillus oryzae (strain ATCC 42149 / RIB 40) (Yellow koji mold) protein is Kynureninase 2 (bna5-2).